A 308-amino-acid chain; its full sequence is tRNA dimethylallyltransferase (308 aa).

14–21 (GPTASGKT) contributes to the ATP binding site. 16–21 (TASGKT) contributes to the substrate binding site. 3 interaction with substrate tRNA regions span residues 39–42 (DSAL), 163–167 (QRLSR), and 244–249 (RCVGYR).

Belongs to the IPP transferase family. As to quaternary structure, monomer. Mg(2+) serves as cofactor.

It carries out the reaction adenosine(37) in tRNA + dimethylallyl diphosphate = N(6)-dimethylallyladenosine(37) in tRNA + diphosphate. Its function is as follows. Catalyzes the transfer of a dimethylallyl group onto the adenine at position 37 in tRNAs that read codons beginning with uridine, leading to the formation of N6-(dimethylallyl)adenosine (i(6)A). The chain is tRNA dimethylallyltransferase from Shewanella baltica (strain OS185).